Reading from the N-terminus, the 578-residue chain is Glycosyltransferase family 92 protein RCOM_0530710 (578 aa).

Residues 21 to 43 (SFFSVRSLTACLSFFVFLLFISS) traverse the membrane as a helical segment. The GT92 domain occupies 295 to 531 (YELCACTMLW…QNQGSKDRAP (237 aa)).

This sequence belongs to the glycosyltransferase 92 family.

The protein localises to the membrane. The sequence is that of Glycosyltransferase family 92 protein RCOM_0530710 from Ricinus communis (Castor bean).